The following is a 714-amino-acid chain: Protein HAPLESS 2-B (714 aa).

Residues 1–33 (MAPRRRRRAARSSRPLLLALLAAAVNNFAPAGG) form the signal peptide. The Extracellular portion of the chain corresponds to 34 to 552 (VEVLAKSRLE…FFTGTTCSTR (519 aa)). 7 disulfide bridges follow: Cys-45/Cys-59, Cys-134/Cys-164, Cys-146/Cys-194, Cys-165/Cys-321, Cys-167/Cys-177, Cys-304/Cys-328, and Cys-441/Cys-479. A helical transmembrane segment spans residues 553–573 (CWSFLKFVIHGLLLVAVLWLL). The Cytoplasmic segment spans residues 574 to 714 (HRKGLFDPLY…HGDRRHHAWH (141 aa)). Residues 597 to 619 (RARRRHKRAHSHRHSHHHDAHKR) are disordered. The segment covering 598-619 (ARRRHKRAHSHRHSHHHDAHKR) has biased composition (basic residues).

The protein belongs to the HAP2/GCS1 family.

It localises to the endoplasmic reticulum membrane. The protein resides in the cell membrane. Required for male fertility. Plays a role in pollen tube guidance and successful gamete attachment. Essential for the fusion of gametes during double fertilization, where one male gamete fuses with the egg to produce a zygote, and another male gamete fuses with the central cell to produce the endosperm. Mediates the fusion of cell membranes. Not required for pollen tube outgrowth. This Oryza sativa subsp. japonica (Rice) protein is Protein HAPLESS 2-B (HAP2B).